We begin with the raw amino-acid sequence, 110 residues long: ATP-dependent Clp protease adapter protein ClpS (110 aa).

Basic and acidic residues predominate over residues Met-1–Glu-10. Residues Met-1–Lys-27 are disordered.

It belongs to the ClpS family. Binds to the N-terminal domain of the chaperone ClpA.

Its function is as follows. Involved in the modulation of the specificity of the ClpAP-mediated ATP-dependent protein degradation. This chain is ATP-dependent Clp protease adapter protein ClpS, found in Parvibaculum lavamentivorans (strain DS-1 / DSM 13023 / NCIMB 13966).